A 1762-amino-acid chain; its full sequence is Non-reducing polyketide synthase PKS8-1 (1762 aa).

The N-terminal acylcarrier protein transacylase domain (SAT) stretch occupies residues 17-247 (DIYRGLHNHS…ARYIELPVYG (231 aa)). The Ketosynthase family 3 (KS3) domain maps to 385–819 (QSKLAITGIS…GGNTTMVLEE (435 aa)). Catalysis depends on for beta-ketoacyl synthase activity residues Cys558, His694, and His737. Residues 920 to 1240 (FSFTGQGASH…MAALHLTGVA (321 aa)) form a malonyl-CoA:ACP transacylase (MAT) domain region. Residues 1308–1622 (TSTVQQVIAL…PRILLNRFFS (315 aa)) are product template (PT) domain. Residues 1312 to 1448 (QQVIALEVEG…GDANDWLSSW (137 aa)) form an N-terminal hotdog fold region. Positions 1312–1618 (QQVIALEVEG…FRSYPRILLN (307 aa)) constitute a PKS/mFAS DH domain. The Proton acceptor; for dehydratase activity role is filled by His1344. The tract at residues 1471–1618 (ASRFTRNMAY…FRSYPRILLN (148 aa)) is C-terminal hotdog fold. Catalysis depends on Asp1529, which acts as the Proton donor; for dehydratase activity. Residues 1632 to 1689 (RAGNAATVTPQVTIPKPPSSLKTPAPANPSRRDSGVESKPLPPPQPKQAPPSTDSENS) form a disordered region. The span at 1671–1680 (PLPPPQPKQA) shows a compositional bias: pro residues. One can recognise a Carrier domain in the interval 1685 to 1762 (DSENSTISKA…DMRRWLEEHY (78 aa)). An O-(pantetheine 4'-phosphoryl)serine modification is found at Ser1722.

It catalyses the reaction holo-[ACP] + 8 malonyl-CoA + 8 H(+) = atrochrysone carboxyl-[ACP] + 8 CO2 + 8 CoA + 2 H2O. It participates in secondary metabolite biosynthesis. In terms of biological role, non-reducing polyketide synthase; part of the gene cluster that mediates the biosynthesis of an emodin derivative that may be involved in black Sigatoka disease of banana. The pathway begins with the synthesis of atrochrysone thioester by the polyketide synthase PKS8-1. The atrochrysone carboxyl ACP thioesterase MYCFIDRAFT_190111 then breaks the thioester bond and releases the atrochrysone carboxylic acid from PKS8-1. The decarboxylase MYCFIDRAFT_34057 then catalyzes the concerted decarboxylation-elimination required to convert atochrysone carboxylic acid into emodin anthrone, which is further oxidized to emodin by the anthrone oxygenase MYCFIDRAFT_34418. The functions of the other tailoring enzymes as well as the final product of the cluster have still to be identified. This is Non-reducing polyketide synthase PKS8-1 (PKS8-1) from Pseudocercospora fijiensis (strain CIRAD86) (Black leaf streak disease fungus).